The sequence spans 478 residues: Kynureninase (478 aa).

Pyridoxal 5'-phosphate is bound by residues Leu-150, Thr-151, Phe-178 to Asp-181, Ser-234, Asp-263, His-266, and Tyr-288. Lys-289 carries the post-translational modification N6-(pyridoxal phosphate)lysine. Trp-318 and Asn-346 together coordinate pyridoxal 5'-phosphate.

Belongs to the kynureninase family. As to quaternary structure, homodimer. Pyridoxal 5'-phosphate is required as a cofactor.

It is found in the cytoplasm. The enzyme catalyses L-kynurenine + H2O = anthranilate + L-alanine + H(+). It catalyses the reaction 3-hydroxy-L-kynurenine + H2O = 3-hydroxyanthranilate + L-alanine + H(+). The protein operates within amino-acid degradation; L-kynurenine degradation; L-alanine and anthranilate from L-kynurenine: step 1/1. Its pathway is cofactor biosynthesis; NAD(+) biosynthesis; quinolinate from L-kynurenine: step 2/3. In terms of biological role, catalyzes the cleavage of L-kynurenine (L-Kyn) and L-3-hydroxykynurenine (L-3OHKyn) into anthranilic acid (AA) and 3-hydroxyanthranilic acid (3-OHAA), respectively. The protein is Kynureninase of Caenorhabditis elegans.